A 415-amino-acid polypeptide reads, in one-letter code: Phosphoglycerate transport system transcriptional regulatory protein PgtA (415 aa).

The 115-residue stretch at 7–121 (SILLIDDDVD…KLLILIEDAL (115 aa)) folds into the Response regulatory domain. The residue at position 56 (Asp56) is a 4-aspartylphosphate. In terms of domain architecture, Sigma-54 factor interaction spans 142–341 (LIGRSEWMNQ…LANAAELFAV (200 aa)). Position 170–177 (170–177 (GEHGTGRM)) interacts with ATP. A DNA-binding region (H-T-H motif) is located at residues 385–404 (INEVAEYLQIPRKKLYLRMK).

Post-translationally, phosphorylated by PgtB.

It is found in the cytoplasm. In terms of biological role, member of the two-component regulatory system PgtB/PgtA that regulates the inducible phosphoglycerate transport system. When activated by PgtB it acts in conjunction with sigma-54 as a transcriptional activator. The sequence is that of Phosphoglycerate transport system transcriptional regulatory protein PgtA (pgtA) from Salmonella typhimurium (strain LT2 / SGSC1412 / ATCC 700720).